The primary structure comprises 603 residues: ABC transporter E family member 1 (603 aa).

4Fe-4S ferredoxin-type domains follow at residues 7 to 39 and 46 to 75; these read RIAIVSEDRCKPKKCRQECKKSCPVVKTGKLCI and KSAFISEELCIGCGICVKKCPFEAIQIINL. ABC transporter domains lie at 70–315 and 344–566; these read IQII…FLAG and VKSY…LSHL. Residues 110-117 and 381-388 contribute to the ATP site; these read GTNGIGKS and GENGTGKT.

The protein belongs to the ABC transporter superfamily. ABCE family. In terms of tissue distribution, expressed in roots, stems, leaves, flowers and siliques.

Its subcellular location is the membrane. The polypeptide is ABC transporter E family member 1 (ABCE1) (Arabidopsis thaliana (Mouse-ear cress)).